The primary structure comprises 496 residues: Glutamyl-tRNA(Gln) amidotransferase subunit A, mitochondrial (496 aa).

Residues lysine 80 and serine 161 each act as charge relay system in the active site. The active-site Acyl-ester intermediate is the serine 185.

The protein belongs to the amidase family. GatA subfamily. As to quaternary structure, subunit of the heterotrimeric GatCAB amidotransferase (AdT) complex, composed of A, B and C subunits.

The protein localises to the mitochondrion. The catalysed reaction is L-glutamyl-tRNA(Gln) + L-glutamine + ATP + H2O = L-glutaminyl-tRNA(Gln) + L-glutamate + ADP + phosphate + H(+). In terms of biological role, allows the formation of correctly charged Gln-tRNA(Gln) through the transamidation of misacylated Glu-tRNA(Gln) in the mitochondria. The reaction takes place in the presence of glutamine and ATP through an activated gamma-phospho-Glu-tRNA(Gln). This Culex quinquefasciatus (Southern house mosquito) protein is Glutamyl-tRNA(Gln) amidotransferase subunit A, mitochondrial.